Reading from the N-terminus, the 257-residue chain is Imidazole glycerol phosphate synthase subunit HisF (257 aa).

Active-site residues include aspartate 11 and aspartate 130.

It belongs to the HisA/HisF family. In terms of assembly, heterodimer of HisH and HisF.

It is found in the cytoplasm. It carries out the reaction 5-[(5-phospho-1-deoxy-D-ribulos-1-ylimino)methylamino]-1-(5-phospho-beta-D-ribosyl)imidazole-4-carboxamide + L-glutamine = D-erythro-1-(imidazol-4-yl)glycerol 3-phosphate + 5-amino-1-(5-phospho-beta-D-ribosyl)imidazole-4-carboxamide + L-glutamate + H(+). Its pathway is amino-acid biosynthesis; L-histidine biosynthesis; L-histidine from 5-phospho-alpha-D-ribose 1-diphosphate: step 5/9. Functionally, IGPS catalyzes the conversion of PRFAR and glutamine to IGP, AICAR and glutamate. The HisF subunit catalyzes the cyclization activity that produces IGP and AICAR from PRFAR using the ammonia provided by the HisH subunit. The polypeptide is Imidazole glycerol phosphate synthase subunit HisF (Shewanella sp. (strain MR-4)).